An 856-amino-acid polypeptide reads, in one-letter code: DNA endonuclease RBBP8 (856 aa).

The interval 25–48 is essential for binding to the MRN complex and for RPA focus formation on DNA damage; it reads ELWSKLKECHDKDLQELLMKIGKL. Coiled coils occupy residues 38–87 and 120–141; these read LQEL…EDRL and ITEL…SEQL. Disordered regions lie at residues 143 to 174 and 423 to 456; these read DMQK…DSPL and DSEQ…DKEN. Over residues 156–168 the composition is skewed to acidic residues; sequence ENPADTGDGEDGV. The tract at residues 493 to 515 is damage-recruitment motif; it reads SSSRTKLTISLVPEKPDTKTILH. Residues 695–732 are disordered; the sequence is SPSQSISCKERSDIPSIENKKITSEKEHESKGEPYQKQ. Over residues 702 to 730 the composition is skewed to basic and acidic residues; it reads CKERSDIPSIENKKITSEKEHESKGEPYQ. The residue at position 806 (Thr806) is a Phosphothreonine. Thr818 is subject to Phosphothreonine; by ATR.

It belongs to the COM1/SAE2/CtIP family. In terms of assembly, homotetramer; formed by antiparallel association of helical extensions protruding from the N-termini of two parallel coiled-coil dimers. Interacts with the MRN complex; the interaction links DNA sensing to resection. Interacts with samhd1. Phosphorylation at Thr-818 by atr promotes recruitment to double-strand breaks (DSBs).

The protein localises to the nucleus. Its subcellular location is the chromosome. Its function is as follows. Endonuclease that cooperates with the MRE11-RAD50-NBN (MRN) complex in DNA-end resection, the first step of double-strand break (DSB) repair through the homologous recombination (HR) pathway. Functions downstream of the MRN complex and ATM, promotes ATR activation and its recruitment to DSBs in the S/G2 phase facilitating the generation of ssDNA. Specifically promotes the endonuclease activity of the MRN complex to clear DNA ends containing protein adducts: recruited to DSBs by nbn following phosphorylation, and promotes the endonuclease of mre11 to clear protein-DNA adducts and generate clean double-strand break ends. The MRN complex and rbbp8/CtIP are also required for chromosome alignment during metaphase. This Xenopus laevis (African clawed frog) protein is DNA endonuclease RBBP8 (rbbp8).